We begin with the raw amino-acid sequence, 281 residues long: Glyoxalase 1 (281 aa).

VOC domains are found at residues Arg4 to Ala127 and Lys132 to Asp251.

This sequence belongs to the glyoxalase I family. In terms of tissue distribution, expressed in the following tissues in both larvae and adults: pharynx, pharyngeal-intestinal valve, intestine, anal sphincter, vulval muscle, seam cells and the nervous system.

Its function is as follows. Thought to act as a glyoxalase. May remove methylglyoxal from mitochondrial proteins. Has roles in reducing oxidative stress and increasing lifespan. The polypeptide is Glyoxalase 1 (glod-4) (Caenorhabditis elegans).